Reading from the N-terminus, the 336-residue chain is Dihydroorotate dehydrogenase (quinone) (336 aa).

Residues Ala-62–Lys-66 and Thr-86 each bind FMN. Lys-66 lines the substrate pocket. Residue Asn-111 to Phe-115 coordinates substrate. Positions 139 and 172 each coordinate FMN. Asn-172 is a binding site for substrate. The Nucleophile role is filled by Ser-175. Asn-177 is a substrate binding site. Residues Lys-217 and Thr-245 each coordinate FMN. Asn-246–Thr-247 lines the substrate pocket. FMN-binding positions include Gly-268, Gly-297, and Tyr-318 to Ser-319.

Belongs to the dihydroorotate dehydrogenase family. Type 2 subfamily. In terms of assembly, monomer. FMN serves as cofactor.

The protein localises to the cell membrane. The enzyme catalyses (S)-dihydroorotate + a quinone = orotate + a quinol. Its pathway is pyrimidine metabolism; UMP biosynthesis via de novo pathway; orotate from (S)-dihydroorotate (quinone route): step 1/1. Catalyzes the conversion of dihydroorotate to orotate with quinone as electron acceptor. This chain is Dihydroorotate dehydrogenase (quinone), found in Salmonella arizonae (strain ATCC BAA-731 / CDC346-86 / RSK2980).